Reading from the N-terminus, the 347-residue chain is D-alanine--D-alanine ligase (347 aa).

The region spanning Lys131–Asp333 is the ATP-grasp domain. Glu161–Glu216 provides a ligand contact to ATP. Residues Asp287, Glu300, and Asn302 each contribute to the Mg(2+) site.

It belongs to the D-alanine--D-alanine ligase family. The cofactor is Mg(2+). Mn(2+) serves as cofactor.

Its subcellular location is the cytoplasm. It catalyses the reaction 2 D-alanine + ATP = D-alanyl-D-alanine + ADP + phosphate + H(+). It functions in the pathway cell wall biogenesis; peptidoglycan biosynthesis. Functionally, cell wall formation. The sequence is that of D-alanine--D-alanine ligase from Streptococcus pneumoniae (strain P1031).